Reading from the N-terminus, the 137-residue chain is Protein FrxA (137 aa).

This is Protein FrxA (frxA) from Pyrococcus furiosus (strain ATCC 43587 / DSM 3638 / JCM 8422 / Vc1).